A 356-amino-acid chain; its full sequence is Anthranilate phosphoribosyltransferase (356 aa).

Residues Gly96, 99 to 100 (GD), Thr104, 106 to 109 (NIST), 124 to 132 (KHGNRSASG), and Ser136 each bind 5-phospho-alpha-D-ribose 1-diphosphate. Position 96 (Gly96) interacts with anthranilate. Ser108 contributes to the Mg(2+) binding site. Asn127 is an anthranilate binding site. Arg182 serves as a coordination point for anthranilate. Mg(2+) is bound by residues Asp241 and Glu242.

This sequence belongs to the anthranilate phosphoribosyltransferase family. Homodimer. Mg(2+) serves as cofactor.

The catalysed reaction is N-(5-phospho-beta-D-ribosyl)anthranilate + diphosphate = 5-phospho-alpha-D-ribose 1-diphosphate + anthranilate. It participates in amino-acid biosynthesis; L-tryptophan biosynthesis; L-tryptophan from chorismate: step 2/5. Functionally, catalyzes the transfer of the phosphoribosyl group of 5-phosphorylribose-1-pyrophosphate (PRPP) to anthranilate to yield N-(5'-phosphoribosyl)-anthranilate (PRA). This is Anthranilate phosphoribosyltransferase from Trichodesmium erythraeum (strain IMS101).